The chain runs to 328 residues: UPF0194 membrane protein YPA_1093 (328 aa).

Positions 1–22 (MNRKKIIVAAVIVALLATLAYG) are cleaved as a signal peptide. Coiled coils occupy residues 80–109 (YLNA…REEE) and 141–209 (KAVS…ILLA).

It belongs to the UPF0194 family.

The protein localises to the periplasm. In Yersinia pestis bv. Antiqua (strain Antiqua), this protein is UPF0194 membrane protein YPA_1093.